Here is a 360-residue protein sequence, read N- to C-terminus: Histidinol-phosphate aminotransferase 2 (360 aa).

Residue Lys-218 is modified to N6-(pyridoxal phosphate)lysine.

This sequence belongs to the class-II pyridoxal-phosphate-dependent aminotransferase family. Histidinol-phosphate aminotransferase subfamily. As to quaternary structure, homodimer. The cofactor is pyridoxal 5'-phosphate.

It carries out the reaction L-histidinol phosphate + 2-oxoglutarate = 3-(imidazol-4-yl)-2-oxopropyl phosphate + L-glutamate. The protein operates within amino-acid biosynthesis; L-histidine biosynthesis; L-histidine from 5-phospho-alpha-D-ribose 1-diphosphate: step 7/9. This chain is Histidinol-phosphate aminotransferase 2, found in Nitrosococcus oceani (strain ATCC 19707 / BCRC 17464 / JCM 30415 / NCIMB 11848 / C-107).